A 238-amino-acid polypeptide reads, in one-letter code: DNA damage-regulated autophagy modulator protein 1 (238 aa).

A run of 6 helical transmembrane segments spans residues 9–29, 53–73, 91–111, 116–136, 161–181, and 200–220; these read AFVPFLLVTWSSAAFIISYVV, SGIFGFMINFSAFLGAATMYT, VFNLVSLVLGLVGCFGMGIVA, LAVPVVHDGGALLAFVCGVVY, MVISAVSCAAVIPMIVCASLI, and VSAICEWTVAFGFIFYFLTFI.

It belongs to the DRAM/TMEM150 family.

The protein resides in the lysosome membrane. Lysosomal modulator of autophagy that plays a central role in p53/TP53-mediated apoptosis. Not involved in p73/TP73-mediated autophagy. This chain is DNA damage-regulated autophagy modulator protein 1 (DRAM1), found in Homo sapiens (Human).